The sequence spans 94 residues: Small ribosomal subunit protein bS6 (94 aa).

The protein belongs to the bacterial ribosomal protein bS6 family.

Functionally, binds together with bS18 to 16S ribosomal RNA. In Clostridium botulinum (strain Loch Maree / Type A3), this protein is Small ribosomal subunit protein bS6.